The following is a 520-amino-acid chain: Sensory neuron membrane protein 1 (520 aa).

Topologically, residues 1 to 5 are cytoplasmic; that stretch reads MKPKK. The helical transmembrane segment at 6-26 threads the bilayer; it reads LGIIGGSLLAFGILICAIAFP. Residues 27–451 are Extracellular-facing; sequence PFLRSQVKKQ…KLKTVFKTIS (425 aa). N-linked (GlcNAc...) asparagine glycans are attached at residues asparagine 64, asparagine 224, and asparagine 268. Disulfide bonds link cysteine 264-cysteine 329, cysteine 293-cysteine 348, and cysteine 331-cysteine 337. A helical transmembrane segment spans residues 452-472; the sequence is IVGFMKWFTIVSGTCVSGAAA. Topologically, residues 473 to 520 are cytoplasmic; sequence ALFFKNKDKNKLDITKVTPQKGEEKKWPNQMTISTIQSAAVPPNLDAD.

The protein belongs to the CD36 family.

The protein resides in the cell membrane. Plays an olfactory role that is not restricted to pheromone sensitivity. This is Sensory neuron membrane protein 1 from Apis mellifera (Honeybee).